A 305-amino-acid chain; its full sequence is U6 small nuclear RNA (adenine-(43)-N(6))-methyltransferase (305 aa).

Residues arginine 85, glycine 110, glutamate 133, serine 164, and asparagine 186 each coordinate S-adenosyl-L-methionine. Positions 194–217 (SPNPFGGNTRNPQRRPAPNNVRTG) are disordered.

The protein belongs to the methyltransferase superfamily. METTL16/RlmF family.

It catalyses the reaction adenosine in U6 snRNA + S-adenosyl-L-methionine = N(6)-methyladenosine in U6 snRNA + S-adenosyl-L-homocysteine + H(+). RNA N6-methyltransferase that mediates N6-methylation of adenine of U6 small nuclear RNA (U6 snRNA). The chain is U6 small nuclear RNA (adenine-(43)-N(6))-methyltransferase from Drosophila pseudoobscura pseudoobscura (Fruit fly).